The chain runs to 491 residues: Probable glycine dehydrogenase (decarboxylating) subunit 2 (491 aa).

Lys-273 is subject to N6-(pyridoxal phosphate)lysine.

This sequence belongs to the GcvP family. C-terminal subunit subfamily. The glycine cleavage system is composed of four proteins: P, T, L and H. In this organism, the P 'protein' is a heterodimer of two subunits. Pyridoxal 5'-phosphate is required as a cofactor.

The enzyme catalyses N(6)-[(R)-lipoyl]-L-lysyl-[glycine-cleavage complex H protein] + glycine + H(+) = N(6)-[(R)-S(8)-aminomethyldihydrolipoyl]-L-lysyl-[glycine-cleavage complex H protein] + CO2. Functionally, the glycine cleavage system catalyzes the degradation of glycine. The P protein binds the alpha-amino group of glycine through its pyridoxal phosphate cofactor; CO(2) is released and the remaining methylamine moiety is then transferred to the lipoamide cofactor of the H protein. The polypeptide is Probable glycine dehydrogenase (decarboxylating) subunit 2 (Bacillus cytotoxicus (strain DSM 22905 / CIP 110041 / 391-98 / NVH 391-98)).